A 54-amino-acid polypeptide reads, in one-letter code: Large ribosomal subunit protein bL33A (54 aa).

The protein belongs to the bacterial ribosomal protein bL33 family.

The protein is Large ribosomal subunit protein bL33A of Mycolicibacterium gilvum (strain PYR-GCK) (Mycobacterium gilvum (strain PYR-GCK)).